Here is a 913-residue protein sequence, read N- to C-terminus: Protein translocase subunit SecA (913 aa).

Residues Gln87, 105-109 (GEGKT), and Asp512 each bind ATP. Positions 897, 899, 908, and 909 each coordinate Zn(2+).

It belongs to the SecA family. In terms of assembly, monomer and homodimer. Part of the essential Sec protein translocation apparatus which comprises SecA, SecYEG and auxiliary proteins SecDF-YajC and YidC. The cofactor is Zn(2+).

Its subcellular location is the cell inner membrane. The protein localises to the cytoplasm. The enzyme catalyses ATP + H2O + cellular proteinSide 1 = ADP + phosphate + cellular proteinSide 2.. In terms of biological role, part of the Sec protein translocase complex. Interacts with the SecYEG preprotein conducting channel. Has a central role in coupling the hydrolysis of ATP to the transfer of proteins into and across the cell membrane, serving both as a receptor for the preprotein-SecB complex and as an ATP-driven molecular motor driving the stepwise translocation of polypeptide chains across the membrane. The polypeptide is Protein translocase subunit SecA (Pseudomonas syringae pv. syringae (strain B728a)).